Here is a 177-residue protein sequence, read N- to C-terminus: NADH-quinone oxidoreductase subunit B (177 aa).

The [4Fe-4S] cluster site is built by Cys-56, Cys-57, Cys-121, and Cys-151.

This sequence belongs to the complex I 20 kDa subunit family. In terms of assembly, NDH-1 is composed of 14 different subunits. Subunits NuoB, C, D, E, F, and G constitute the peripheral sector of the complex. It depends on [4Fe-4S] cluster as a cofactor.

It is found in the cell inner membrane. The enzyme catalyses a quinone + NADH + 5 H(+)(in) = a quinol + NAD(+) + 4 H(+)(out). NDH-1 shuttles electrons from NADH, via FMN and iron-sulfur (Fe-S) centers, to quinones in the respiratory chain. Couples the redox reaction to proton translocation (for every two electrons transferred, four hydrogen ions are translocated across the cytoplasmic membrane), and thus conserves the redox energy in a proton gradient. The sequence is that of NADH-quinone oxidoreductase subunit B from Ruegeria pomeroyi (strain ATCC 700808 / DSM 15171 / DSS-3) (Silicibacter pomeroyi).